The primary structure comprises 240 residues: UDP-2,3-diacylglucosamine hydrolase (240 aa).

Residues aspartate 8, histidine 10, aspartate 41, asparagine 79, and histidine 114 each contribute to the Mn(2+) site. Position 79 to 80 (79 to 80) interacts with substrate; it reads NR. 5 residues coordinate substrate: aspartate 122, serine 160, asparagine 164, lysine 167, and histidine 195. Histidine 195 and histidine 197 together coordinate Mn(2+).

Belongs to the LpxH family. Mn(2+) serves as cofactor.

The protein resides in the cell inner membrane. It catalyses the reaction UDP-2-N,3-O-bis[(3R)-3-hydroxytetradecanoyl]-alpha-D-glucosamine + H2O = 2-N,3-O-bis[(3R)-3-hydroxytetradecanoyl]-alpha-D-glucosaminyl 1-phosphate + UMP + 2 H(+). It functions in the pathway glycolipid biosynthesis; lipid IV(A) biosynthesis; lipid IV(A) from (3R)-3-hydroxytetradecanoyl-[acyl-carrier-protein] and UDP-N-acetyl-alpha-D-glucosamine: step 4/6. Hydrolyzes the pyrophosphate bond of UDP-2,3-diacylglucosamine to yield 2,3-diacylglucosamine 1-phosphate (lipid X) and UMP by catalyzing the attack of water at the alpha-P atom. Involved in the biosynthesis of lipid A, a phosphorylated glycolipid that anchors the lipopolysaccharide to the outer membrane of the cell. The protein is UDP-2,3-diacylglucosamine hydrolase of Escherichia coli O157:H7.